The chain runs to 1031 residues: MAAATGLEEAVAPMGALCGLVQDFVMGQQEGPADQVAADVKSGGYTVLQVVEALGSSLENAEPRTRARGAQLLSQVLLQCHSLLSEKEVVHLILFYENRLKDHHLVVPSVLQGLRALSMSVALPPGLAVSVLKAIFQEVHVQSLLQVDRHTVFSIITNFMRSREEELKGLGADFTFGFIQVMDGEKDPRNLLLAFRIVHDLISKDYSLGPFVEELFEVTSCYFPIDFTPPPNDPYGIQREDLILSLRAVLASTPRFAEFLLPLLIEKVDSEILSAKLDSLQTLNACCAVYGQKELKDFLPSLWASIRREVFQTASERVEAEGLAALHSLTACLSCSVLRADAEDLLGSFLSNILQDCRHHLCEPDMKLVWPSAKLLQAAAGASARACEHLTSNVLPLLLEQFHKHSQSNQRRTILEMILGFLKLQQKWSYEDRDERPLSSFKDQLCSLVFMALTDPSTQLQLVGIRTLTVLGAQPGLLSAEDLELAVGHLYRLTFLEEDSQSCRVAALEASGTLATLYPGAFSRHLLPKLAEELHKGESDVARADGPTKCSRHFRCLQALSAVSTHPSIVKETLPLLLQHLCQANKGNMVTESSEVVAVCQSLQQVAEKCQQDPESYWYFHKTAVPCLFALAVQASMPEKESSVLRKVLLEDEVLAALASVIGTATTHLSPELAAQSVTCIVPLFLDGNTSFLPENSFPDQFQPFQDGSSGQRRLVALLTAFVCSLPRNVEIPQLNRLMRELLKQSCGHSCPFSSTAATKCFAGLLNKQPPGQQLEEFLQLAVGTVEAGLASESSRDQAFTLLLWVTKALVLRYHPLSACLTTRLMGLLSDPELGCAAADGFSLLMSDCTDVLTRAGHADVRIMFRQRFFTDNVPALVQGFHAAPQDVKPNYLKGLSHVLNRLPKPVLLPELPTLLSLLLEALSCPDSVVQLSTLSCLQPLLLEAPQIMSLHVDTLVTKFLNLSSSYSMAVRIAALQCMHALTRLPTSVLLPYKSQVIRALAKPLDDKKRLVRKEAVSARGEWFLLGSPGS.

Residue Ala2 is modified to N-acetylalanine. HEAT repeat units follow at residues 867 to 905 (QRFF…RLPK), 909 to 947 (LPEL…EAPQ), 950 to 988 (SLHV…LPTS), and 991 to 1029 (LPYK…LGSP). Position 1028 is a phosphoserine (Ser1028).

Belongs to the MET18/MMS19 family. As to quaternary structure, component of the CIA complex. In the CIA complex, interacts directly with CIAO2B and CIAO3. Component of the MMXD complex, composed of CIAO1, ERCC2, CIAO2B, MMS19 and SLC25A5. Interacts with CIAO2B; the interaction is direct. Interacts with ERCC2/XPD; the interaction is direct. Interacts with ERCC3/XPB and NCOA3/RAC3. Interacts with RTEL1; the interaction mediates the association of RTEL1 with the CIA complex. Interacts with BRIP1. Interacts with KIF4A; the interaction facilitates the transfer of Fe-S clusters to KIF4A to ensure proper localization of KIF4A to the mitotic machinery components. Interacts with CCDC117; the interaction is indirect. In terms of processing, ubiquitinated; undergoes 'Lys-48'-linked polyubiquitination. Ubiquitously expressed with higher expression in testis.

Its subcellular location is the nucleus. It localises to the cytoplasm. The protein localises to the cytoskeleton. The protein resides in the spindle. Its function is as follows. Key component of the cytosolic iron-sulfur protein assembly (CIA) complex, a multiprotein complex that mediates the incorporation of iron-sulfur cluster into apoproteins specifically involved in DNA metabolism and genomic integrity. In the CIA complex, MMS19 acts as an adapter between early-acting CIA components and a subset of cellular target Fe/S proteins such as ERCC2/XPD, FANCJ and RTEL1, thereby playing a key role in nucleotide excision repair (NER), homologous recombination-mediated double-strand break DNA repair, DNA replication and RNA polymerase II (POL II) transcription. As a CIA complex component and in collaboration with CIAO1 and CIAO2, binds to and facilitates the assembly of most cytosolic-nuclear Fe/S proteins. As part of the mitotic spindle-associated MMXD complex, plays a role in chromosome segregation, probably by facilitating iron-sulfur cluster assembly into ERCC2/XPD. Together with CIAO2, facilitates the transfer of Fe-S clusters to the motor protein KIF4A, which ensures proper localization of KIF4A to mitotic machinery components to promote the progression of mitosis. Indirectly acts as a transcriptional coactivator of estrogen receptor (ER), via its role in iron-sulfur insertion into some component of the TFIIH-machinery. The polypeptide is MMS19 nucleotide excision repair protein homolog (Mus musculus (Mouse)).